Here is a 90-residue protein sequence, read N- to C-terminus: DNA-binding protein HU-1 (90 aa).

The residue at position 4 (Thr4) is a Phosphothreonine. The segment at 55–90 (RSARKGRNPQTGEEIEIPATKNPAFKPGKQLKDAVN) is disordered.

Belongs to the bacterial histone-like protein family. Homodimer.

Its function is as follows. Histone-like DNA-binding protein which is capable of wrapping DNA to stabilize it, and thus to prevent its denaturation under extreme environmental conditions. In Halalkalibacterium halodurans (strain ATCC BAA-125 / DSM 18197 / FERM 7344 / JCM 9153 / C-125) (Bacillus halodurans), this protein is DNA-binding protein HU-1 (hup1).